The chain runs to 629 residues: tRNA uridine 5-carboxymethylaminomethyl modification enzyme MnmG (629 aa).

Position 4 to 9 (4 to 9) interacts with FAD; that stretch reads GGGHAG. 268-282 lines the NAD(+) pocket; it reads GPRYCPSIEDKVNRF.

This sequence belongs to the MnmG family. As to quaternary structure, homodimer. Heterotetramer of two MnmE and two MnmG subunits. The cofactor is FAD.

It localises to the cytoplasm. NAD-binding protein involved in the addition of a carboxymethylaminomethyl (cmnm) group at the wobble position (U34) of certain tRNAs, forming tRNA-cmnm(5)s(2)U34. The chain is tRNA uridine 5-carboxymethylaminomethyl modification enzyme MnmG from Helicobacter hepaticus (strain ATCC 51449 / 3B1).